The following is a 506-amino-acid chain: Probable Xaa-Pro aminopeptidase PADG_06815 (506 aa).

Positions 285, 296, 433, and 471 each coordinate Mn(2+).

The protein belongs to the peptidase M24B family. Mn(2+) is required as a cofactor.

It carries out the reaction Release of any N-terminal amino acid, including proline, that is linked to proline, even from a dipeptide or tripeptide.. In terms of biological role, catalyzes the removal of a penultimate prolyl residue from the N-termini of peptides. The polypeptide is Probable Xaa-Pro aminopeptidase PADG_06815 (Paracoccidioides brasiliensis (strain Pb18)).